The sequence spans 347 residues: Protein RecA (347 aa).

Residue 67-74 (GPESSGKT) participates in ATP binding.

It belongs to the RecA family.

Its subcellular location is the cytoplasm. In terms of biological role, can catalyze the hydrolysis of ATP in the presence of single-stranded DNA, the ATP-dependent uptake of single-stranded DNA by duplex DNA, and the ATP-dependent hybridization of homologous single-stranded DNAs. It interacts with LexA causing its activation and leading to its autocatalytic cleavage. The polypeptide is Protein RecA (Helicobacter pylori (strain HPAG1)).